The following is a 324-amino-acid chain: Rho crystallin (324 aa).

Thr2 is subject to N-acetylthreonine. 218-281 (SVLGSHRDRN…SFTPARIKQN (64 aa)) provides a ligand contact to NADP(+).

It belongs to the aldo/keto reductase family. Monomer.

The polypeptide is Rho crystallin (Rana temporaria (European common frog)).